Reading from the N-terminus, the 434-residue chain is 23S rRNA (uracil(1939)-C(5))-methyltransferase RlmD (434 aa).

The 59-residue stretch at 10-68 folds into the TRAM domain; sequence RVTTRQIITVTVNDLDPFGQGVARHQGKALFVSGVLPQEQAEVVLVEDKKQYARAQVKR. Positions 81, 87, 90, and 162 each coordinate [4Fe-4S] cluster. S-adenosyl-L-methionine is bound by residues Q265, F294, N299, E315, N342, and D363. The active-site Nucleophile is C389.

The protein belongs to the class I-like SAM-binding methyltransferase superfamily. RNA M5U methyltransferase family. RlmD subfamily.

It catalyses the reaction uridine(1939) in 23S rRNA + S-adenosyl-L-methionine = 5-methyluridine(1939) in 23S rRNA + S-adenosyl-L-homocysteine + H(+). In terms of biological role, catalyzes the formation of 5-methyl-uridine at position 1939 (m5U1939) in 23S rRNA. The chain is 23S rRNA (uracil(1939)-C(5))-methyltransferase RlmD from Klebsiella pneumoniae (strain 342).